The following is a 600-amino-acid chain: Aspartate--tRNA(Asp/Asn) ligase (600 aa).

L-aspartate is bound at residue Glu174. An aspartate region spans residues 198 to 201 (QLFK). Residue Arg220 participates in L-aspartate binding. ATP-binding positions include 220–222 (RDE) and Gln229. His457 is an L-aspartate binding site. Glu491 contacts ATP. Arg498 contacts L-aspartate. 543 to 546 (GLDR) lines the ATP pocket.

The protein belongs to the class-II aminoacyl-tRNA synthetase family. Type 1 subfamily. In terms of assembly, homodimer.

It localises to the cytoplasm. It catalyses the reaction tRNA(Asx) + L-aspartate + ATP = L-aspartyl-tRNA(Asx) + AMP + diphosphate. Functionally, aspartyl-tRNA synthetase with relaxed tRNA specificity since it is able to aspartylate not only its cognate tRNA(Asp) but also tRNA(Asn). Reaction proceeds in two steps: L-aspartate is first activated by ATP to form Asp-AMP and then transferred to the acceptor end of tRNA(Asp/Asn). This Burkholderia lata (strain ATCC 17760 / DSM 23089 / LMG 22485 / NCIMB 9086 / R18194 / 383) protein is Aspartate--tRNA(Asp/Asn) ligase.